A 593-amino-acid chain; its full sequence is Probable tripeptidyl-peptidase SED3 (593 aa).

The signal sequence occupies residues 1–18 (MLLRWHSVIPLFLAMTVA). A propeptide spans 19-198 (FPNTYRTVVE…NLQAIYLSTN (180 aa)) (removed in mature form). 3 N-linked (GlcNAc...) asparagine glycosylation sites follow: asparagine 204, asparagine 261, and asparagine 275. One can recognise a Peptidase S53 domain in the interval 206-592 (TITPRCLREL…RILAKIVQHM (387 aa)). Residues glutamate 282 and aspartate 286 each act as charge relay system in the active site. Residue asparagine 295 is glycosylated (N-linked (GlcNAc...) asparagine). Catalysis depends on serine 496, which acts as the Charge relay system. Ca(2+)-binding residues include aspartate 538 and isoleucine 539. N-linked (GlcNAc...) asparagine glycans are attached at residues asparagine 554 and asparagine 566. Residues glycine 570 and aspartate 572 each contribute to the Ca(2+) site.

Requires Ca(2+) as cofactor.

The protein resides in the secreted. The protein localises to the extracellular space. It catalyses the reaction Release of an N-terminal tripeptide from a polypeptide.. Functionally, secreted tripeptidyl-peptidase which degrades proteins at acidic pHs and is involved in virulence. The polypeptide is Probable tripeptidyl-peptidase SED3 (SED3) (Arthroderma benhamiae (strain ATCC MYA-4681 / CBS 112371) (Trichophyton mentagrophytes)).